The chain runs to 209 residues: Kynurenine formamidase (209 aa).

Substrate is bound at residue Phe-18. Positions 48, 52, and 54 each coordinate Zn(2+). Catalysis depends on His-58, which acts as the Proton donor/acceptor. Zn(2+) contacts are provided by His-160 and Glu-172.

Belongs to the Cyclase 1 superfamily. KynB family. Homodimer. The cofactor is Zn(2+).

The enzyme catalyses N-formyl-L-kynurenine + H2O = L-kynurenine + formate + H(+). It functions in the pathway amino-acid degradation; L-tryptophan degradation via kynurenine pathway; L-kynurenine from L-tryptophan: step 2/2. Catalyzes the hydrolysis of N-formyl-L-kynurenine to L-kynurenine, the second step in the kynurenine pathway of tryptophan degradation. This is Kynurenine formamidase from Bordetella avium (strain 197N).